Consider the following 431-residue polypeptide: Glycerol-3-phosphate dehydrogenase [NAD(P)+] (431 aa).

NADPH contacts are provided by Ser79, Phe80, Arg100, and Lys173. Sn-glycerol 3-phosphate-binding residues include Lys173 and Gly201. Ala205 lines the NADPH pocket. Positions 256, 309, 319, 320, and 321 each coordinate sn-glycerol 3-phosphate. Lys256 functions as the Proton acceptor in the catalytic mechanism. Arg320 contacts NADPH. Glu346 is a binding site for NADPH.

The protein belongs to the NAD-dependent glycerol-3-phosphate dehydrogenase family.

It is found in the cytoplasm. It carries out the reaction sn-glycerol 3-phosphate + NAD(+) = dihydroxyacetone phosphate + NADH + H(+). It catalyses the reaction sn-glycerol 3-phosphate + NADP(+) = dihydroxyacetone phosphate + NADPH + H(+). Its pathway is membrane lipid metabolism; glycerophospholipid metabolism. Catalyzes the reduction of the glycolytic intermediate dihydroxyacetone phosphate (DHAP) to sn-glycerol 3-phosphate (G3P), the key precursor for phospholipid synthesis. In Psychrobacter cryohalolentis (strain ATCC BAA-1226 / DSM 17306 / VKM B-2378 / K5), this protein is Glycerol-3-phosphate dehydrogenase [NAD(P)+].